The sequence spans 187 residues: Large ribosomal subunit protein uL10 (187 aa).

Belongs to the universal ribosomal protein uL10 family. Part of the ribosomal stalk of the 50S ribosomal subunit. The N-terminus interacts with L11 and the large rRNA to form the base of the stalk. The C-terminus forms an elongated spine to which L12 dimers bind in a sequential fashion forming a multimeric L10(L12)X complex.

Functionally, forms part of the ribosomal stalk, playing a central role in the interaction of the ribosome with GTP-bound translation factors. The protein is Large ribosomal subunit protein uL10 of Synechococcus sp. (strain JA-2-3B'a(2-13)) (Cyanobacteria bacterium Yellowstone B-Prime).